A 576-amino-acid chain; its full sequence is MAPISLSDIISALPSEDSWGPSTTSETTLNGVPYAPYSKGDKLGRMADWTAEGKDGRDGRGGRQQYNRNYRDQQVYGAGTSSLFAVQLAEDESTFSVVSNTRDSTKTRFGRGGLARGRGQRGGRGDTRGGRGQFQRVGGRGGQQGYNSYDTRGGRGGARGGRKFGWKDYDKPQRNRDASVNIKPDWKMLEEIDFNRLAKLNLDTDDGEDIDSYGFLYYYDRSFDKQPVKAAERKLNVVDRASYNVTTSSDPVIQELAEKDEATIFATDSILSMLMCSPRSVYPWDIVIVRQGNKVFLDKRDNATLDMVTVNENAADAPMDASEGSKDAINQPSALAEEATYINHNFANQVMKESDSQKVEMENENPFYNSAEETDPPASKAYKYRKFDLSLNDEDPVHLVVRTELDAVSKNAISGEDQFLTVKALNEFDSKAQGSGGALDWRTKLVSQRGAVVATEMKNNSCKLARWTVQSIIAKADVMKLGFVSRANPKLNDRHVVLGVIGWKPRDFASQMNLSLSNGWGIVRTIVDMCLKREEGKYVLVKDPNKPILRLYQVPAGSFEDDGEHDVIEENVEEDD.

A disordered region spans residues 103-176; that stretch reads DSTKTRFGRG…KDYDKPQRNR (74 aa). Positions 110 to 122 are enriched in gly residues; it reads GRGGLARGRGQRG. A compositionally biased stretch (basic and acidic residues) spans 165-176; sequence GWKDYDKPQRNR. An RNA gate region spans residues 304-318; sequence TLDMVTVNENAADAP.

The protein belongs to the eIF-3 subunit D family. Component of the eukaryotic translation initiation factor 3 (eIF-3) complex.

Its subcellular location is the cytoplasm. MRNA cap-binding component of the eukaryotic translation initiation factor 3 (eIF-3) complex, which is involved in protein synthesis of a specialized repertoire of mRNAs and, together with other initiation factors, stimulates binding of mRNA and methionyl-tRNAi to the 40S ribosome. The eIF-3 complex specifically targets and initiates translation of a subset of mRNAs involved in cell proliferation. In the eIF-3 complex, eif3d specifically recognizes and binds the 7-methylguanosine cap of a subset of mRNAs. In Botryotinia fuckeliana (strain B05.10) (Noble rot fungus), this protein is Eukaryotic translation initiation factor 3 subunit D.